The following is a 143-amino-acid chain: 3-dehydroquinate dehydratase (143 aa).

Tyr21 functions as the Proton acceptor in the catalytic mechanism. Residues Asn73, His79, and Asp86 each contribute to the substrate site. The active-site Proton donor is the His99. Substrate is bound by residues 100-101 (IS) and Arg110.

It belongs to the type-II 3-dehydroquinase family. As to quaternary structure, homododecamer.

The enzyme catalyses 3-dehydroquinate = 3-dehydroshikimate + H2O. It functions in the pathway metabolic intermediate biosynthesis; chorismate biosynthesis; chorismate from D-erythrose 4-phosphate and phosphoenolpyruvate: step 3/7. Functionally, catalyzes a trans-dehydration via an enolate intermediate. The polypeptide is 3-dehydroquinate dehydratase (Deinococcus radiodurans (strain ATCC 13939 / DSM 20539 / JCM 16871 / CCUG 27074 / LMG 4051 / NBRC 15346 / NCIMB 9279 / VKM B-1422 / R1)).